We begin with the raw amino-acid sequence, 332 residues long: Trace amine-associated receptor 1 (332 aa).

The Extracellular segment spans residues 1-23; sequence MHLCHAITNISHRNSDWSREVQA. An N-linked (GlcNAc...) asparagine glycan is attached at Asn9. The chain crosses the membrane as a helical span at residues 24–48; that stretch reads SLYSLMSLIILATLVGNLIVIISIS. Residues 49–58 are Cytoplasmic-facing; that stretch reads HFKQLHTPTN. The chain crosses the membrane as a helical span at residues 59–80; the sequence is WLLHSMAIVDFLLGCLIMPCSM. The Extracellular segment spans residues 81–95; the sequence is VRTVERCWYFGEILC. Cys95 and Cys181 are disulfide-bonded. The chain crosses the membrane as a helical span at residues 96 to 118; the sequence is KVHTSTDIMLSSASIFHLAFISI. A 2-phenylethylamine-binding site is contributed by Asp102. Residues 119 to 138 are Cytoplasmic-facing; sequence DRYCAVCDPLRYKAKINIST. The helical transmembrane segment at 139–160 threads the bilayer; that stretch reads ILVMILVSWSLPAVYAFGMIFL. At 161 to 187 the chain is on the extracellular side; the sequence is ELNLKGVEELYRSQVSDLGGCSPFFSK. The interval 174 to 185 is extracellular Loop 2 (ECL2); sequence QVSDLGGCSPFF. The chain crosses the membrane as a helical span at residues 188–210; that stretch reads VSGVLAFMTSFYIPGSVMLFVYY. Topologically, residues 211–246 are cytoplasmic; the sequence is RIYFIAKGQARSINRTNVQVGLEGKSQAPQSKETKA. The chain crosses the membrane as a helical span at residues 247-270; it reads AKTLGIMVGVFLVCWCPFFLCTVL. The Extracellular portion of the chain corresponds to 271-283; that stretch reads DPFLGYVIPPSLN. Residues 284 to 304 traverse the membrane as a helical segment; it reads DALYWFGYLNSALNPMVYAFF. Residues 305-332 lie on the Cytoplasmic side of the membrane; it reads YPWFRRALKMVLLGKIFQKDSSRSKLFL.

The protein belongs to the G-protein coupled receptor 1 family. Widely distributed throughout the brain. Strongly expressed in the mitral cell layer of the olfactory bulb, piriform cortex, the arcuate, motor, and mesencephalic trigeminal nuclei, lateral reticular and hypoglossal nuclei, cerebellar Purkinje cells, and ventral horn of the spinal cord. Moderately expressed in the frontal, entorhinal, and agranular cortices, the ventral pallidum, thalamus, hippocampus, several hypothalamic nuclei, ambiguus, dorsal raphe, and gigantocellular reticular nuclei. Weakly expressed in the septum, basal ganglia, amygdala, myelencephalon, and spinal cord dorsal horn. Particularly interesting is the moderate expression in several monoaminergic cell groups, namely the dorsal raphe, the locus coeruleus, and the ventral tegmental area.

The protein localises to the endomembrane system. It is found in the endoplasmic reticulum membrane. It localises to the cell membrane. Activated by SEP-363856 small molecule: IHCH-7179 acts both as an agonist activator for HTR1A and TAAR1. In terms of biological role, intracellular G-protein coupled receptor for trace amines, which recognizes endogenous amine-containing metabolites such as beta-phenylethylamine (beta-PEA), 3-iodothyronamine (T1AM), isoamylamine (IAA), cadaverine (CAD), cyclohexylamine (CHA), p-tyramine (p-TYR), trimethylamine (TMA), octopamine and tryptamine. Also functions as a receptor for various drugs and psychoactive substances, such as amphetamine and methamphetamine. Unresponsive to classical biogenic amines, such as epinephrine and histamine and only partially activated by dopamine and serotonin. Expressed in both the central and peripheral nervous system: TAAR1 activation regulates the activity of several neurotransmitter signaling pathways by (1) decreasing the basal firing rates of the neurons involved and by (2) lowering the sensitivity of receptors to neurotransmitters. Ligand binding causes a conformation change that triggers signaling via guanine nucleotide-binding proteins (G proteins) and modulates the activity of downstream effectors. TAAR1 is coupled with different G(i)/G(o)-, G(s)- or G(q)/G(11) classes of G alpha proteins depending on the ligand. CAD-binding is coupled to G(i)/G(o) G alpha proteins and mediates inhibition of adenylate cyclase activity. T1AM- or beta-PEA-binding is coupled to G(s) G alpha proteins and mediates activation of adenylate cyclase activity. CHA- or IAA-binding is coupled to G(q)/G(11) G alpha proteins and activates phospholipase C-beta, releasing diacylglycerol (DAG) and inositol 1,4,5-trisphosphate (IP3) second messengers. TMA-binding is coupled with all three G(i)/G(o)-, G(s)- or G(q)/G(11) G alpha protein subtypes. This chain is Trace amine-associated receptor 1, found in Mus musculus (Mouse).